The sequence spans 276 residues: Short-chain dehydrogenase/reductase ATR10 (276 aa).

4 residues coordinate NADP(+): I29, S51, D78, and N105. S161 acts as the Proton donor in catalysis. NADP(+)-binding residues include K185 and T214. K185 functions as the Lowers pKa of active site Tyr in the catalytic mechanism.

It belongs to the short-chain dehydrogenases/reductases (SDR) family.

The protein operates within mycotoxin biosynthesis. Functionally, short-chain dehydrogenase/reductase; part of the core atranone cluster (CAC) which products are predicted to catalyze most or all steps of mycotoxin atranone synthesis, starting from geranylgeranyl pyrophosphate (GGPP). The initial cyclization of GGPP to dolabellane is probably performed by the terpene cyclase ATR13. The Baeyer-Villiger oxidation near the end of the atranone synthesis, which converts atranones D and E to atranones F and G is predicted to be catalyzed by the monooxygenase ATR8. Of the CAC's other predicted gene products, the reducing PKS ATR6 might synthesize a polyketide chain. This polyketide is probably transferred onto the atranone backbone by the polyketide transferase ATR5. Other predicted CAC products include 4 oxygenases (ATR2, ATR3, ATR4, and ATR14), 3 short-chain reductases (ATR7, ATR9, and ATR10), and a methyltransferase (ATR12). These may all be involved in the various steps of atranone biosynthesis, although their specific roles must await experimental determination. This is Short-chain dehydrogenase/reductase ATR10 from Stachybotrys chlorohalonatus (strain IBT 40285).